The chain runs to 443 residues: Trigger factor (443 aa).

Residues 169–254 (GDIAFLDFSG…LNSIKEVQLP (86 aa)) form the PPIase FKBP-type domain.

This sequence belongs to the FKBP-type PPIase family. Tig subfamily.

The protein localises to the cytoplasm. It carries out the reaction [protein]-peptidylproline (omega=180) = [protein]-peptidylproline (omega=0). Involved in protein export. Acts as a chaperone by maintaining the newly synthesized protein in an open conformation. Functions as a peptidyl-prolyl cis-trans isomerase. This Mycoplasmoides gallisepticum (strain R(low / passage 15 / clone 2)) (Mycoplasma gallisepticum) protein is Trigger factor.